The primary structure comprises 673 residues: DNA topoisomerase 1 (673 aa).

A Toprim domain is found at 1–134 (MVAEKPKAAA…ARRMKFSTLA (134 aa)). Glu4 and Asp103 together coordinate Mg(2+). One can recognise a Topo IA-type catalytic domain in the interval 149–568 (DVEMIEAGMA…MSKKTISKLL (420 aa)). An interaction with DNA region spans residues 189 to 194 (SAGRVQ). The active-site O-(5'-phospho-DNA)-tyrosine intermediate is Tyr311. Residues 352-374 (LRPVQGSKDDPAHPAIHPTGEKP) form a disordered region. The C4-type zinc finger occupies 595 to 615 (CHLCGRKAVSAVSGYRLCSHH).

Belongs to the type IA topoisomerase family. In terms of assembly, monomer. Requires Mg(2+) as cofactor.

The enzyme catalyses ATP-independent breakage of single-stranded DNA, followed by passage and rejoining.. Functionally, releases the supercoiling and torsional tension of DNA, which is introduced during the DNA replication and transcription, by transiently cleaving and rejoining one strand of the DNA duplex. Introduces a single-strand break via transesterification at a target site in duplex DNA. The scissile phosphodiester is attacked by the catalytic tyrosine of the enzyme, resulting in the formation of a DNA-(5'-phosphotyrosyl)-enzyme intermediate and the expulsion of a 3'-OH DNA strand. The free DNA strand then undergoes passage around the unbroken strand, thus removing DNA supercoils. Finally, in the religation step, the DNA 3'-OH attacks the covalent intermediate to expel the active-site tyrosine and restore the DNA phosphodiester backbone. The chain is DNA topoisomerase 1 from Aeropyrum pernix (strain ATCC 700893 / DSM 11879 / JCM 9820 / NBRC 100138 / K1).